The chain runs to 164 residues: UBA-like domain-containing protein 2 (164 aa).

N-acetylserine is present on S2. Residues 128-164 (SSPTTFHHLHRPQPTWPPGAQQGGAQQKAMAAMDGQR) are disordered. Over residues 146-164 (GAQQGGAQQKAMAAMDGQR) the composition is skewed to low complexity.

The protein belongs to the UBALD family.

This Homo sapiens (Human) protein is UBA-like domain-containing protein 2 (UBALD2).